A 326-amino-acid chain; its full sequence is Vitamin B12 import system permease protein BtuC (326 aa).

9 helical membrane passes run 17 to 39 (LSLSLLVLLATLLSLCAGEQWIA), 59 to 81 (RTLAVLLVGAALALSGAVMQALF), 88 to 107 (PGLLGVSNGAGVGLIAAVLL), 111 to 133 (QLPGWALGLCAIAGALIITLILL), 146 to 168 (LLAGVALGIICSALMTWAIYFST), 188 to 205 (WQQSWLMIALIPVLIWIC), 242 to 264 (MVGVSVAMAGAIGFIGLVIPHIL), 274 to 296 (VLLPGCALAGAIALLLADVVARL), and 303 to 322 (LPIGVVTATLGAPVFIWLLL).

The protein belongs to the binding-protein-dependent transport system permease family. FecCD subfamily. As to quaternary structure, the complex is composed of two ATP-binding proteins (BtuD), two transmembrane proteins (BtuC) and a solute-binding protein (BtuF).

Its subcellular location is the cell inner membrane. Its function is as follows. Part of the ABC transporter complex BtuCDF involved in vitamin B12 import. Involved in the translocation of the substrate across the membrane. The protein is Vitamin B12 import system permease protein BtuC of Salmonella typhi.